Here is a 43-residue protein sequence, read N- to C-terminus: Protein PsbN (43 aa).

A helical transmembrane segment spans residues 7-27 (IAIFISCLIVSFTGYALYTAF).

This sequence belongs to the PsbN family.

It is found in the plastid. It localises to the chloroplast thylakoid membrane. Functionally, may play a role in photosystem I and II biogenesis. This Psilotum nudum (Whisk fern) protein is Protein PsbN.